We begin with the raw amino-acid sequence, 490 residues long: Betaine aldehyde dehydrogenase (490 aa).

Residues T26, I27, and D93 each coordinate K(+). 150 to 152 (GAW) is an NAD(+) binding site. K162 functions as the Charge relay system in the catalytic mechanism. Residue 176–179 (KPSE) participates in NAD(+) binding. V180 provides a ligand contact to K(+). 230–233 (GVAS) serves as a coordination point for NAD(+). K(+) is bound at residue L246. Catalysis depends on E252, which acts as the Proton acceptor. NAD(+) contacts are provided by G254, C286, and E387. Residue C286 is the Nucleophile of the active site. C286 carries the post-translational modification Cysteine sulfenic acid (-SOH). K(+) is bound by residues K457 and G460. E464 acts as the Charge relay system in catalysis.

It belongs to the aldehyde dehydrogenase family. Dimer of dimers. K(+) serves as cofactor.

It carries out the reaction betaine aldehyde + NAD(+) + H2O = glycine betaine + NADH + 2 H(+). The protein operates within amine and polyamine biosynthesis; betaine biosynthesis via choline pathway; betaine from betaine aldehyde: step 1/1. Its function is as follows. Involved in the biosynthesis of the osmoprotectant glycine betaine. Catalyzes the irreversible oxidation of betaine aldehyde to the corresponding acid. In Escherichia coli O8 (strain IAI1), this protein is Betaine aldehyde dehydrogenase.